Consider the following 87-residue polypeptide: Small ribosomal subunit protein bS20 (87 aa).

Belongs to the bacterial ribosomal protein bS20 family.

In terms of biological role, binds directly to 16S ribosomal RNA. The chain is Small ribosomal subunit protein bS20 from Clostridium perfringens (strain ATCC 13124 / DSM 756 / JCM 1290 / NCIMB 6125 / NCTC 8237 / Type A).